Reading from the N-terminus, the 902-residue chain is MFPALETHLKQTIPDPYEDFMYRHLQYYGYFKAQRGSLPNSATHQHVRKNNPQCLLNGSLGEKDDLIPDTLQKEKLLWPISLSSAVHRQIEAINRDFHSCLGWMQWRGLSSLQPPPPRFKDSPASAFRVAGITDSHMLSLPHLRSRQLLYDELDEVNPRLREPQELFSILSTKRPLQAPRWPIECEVIKENIHHIEWAPPQPEYFYQPKGNEKVPEIVGEKKGTVVYQLDSVPIEGSYFTSSRVGGKRGIVKELAVTLQGPEDNTLLFESRFESGNLQKAVRVDTYEYELTLRTDLYTNKHTQWFYFRVQNTRKDATYRFTIVNLLKPKSLYTVGMKPLLYSQLDANTRNIGWRREGNEIKYYKNNTDDGQQPFYCLTWTIQFPYDQDTCFFAHFYPYTYTDLQCYLLSVANNPIQSQFCKLQTLCRSLAGNTVYLLTITNPSQTPQEAAAKKAVVLSARVHPGESNGSWVMKGFLDFILSNSPDAQLLRDIFVFKVLPMLNPDGVIVGNYRCSLAGRDLNRHYKTILKESFPCIWYTRNMIKRLLEEREVLLYCDFHGHSRKNNIFLYGCNNNNRKYWLHERVFPLMLCKNAPDKFSFHSCNFKVQKCKEGTGRVVMWRMGILNSYTMESTFGGSTLGNKRDTHFTIEDLKSLGYHVCDTLLDFCDPDQMKFTQCLAELKELLRQEIHKKFHELGQDVDLEGSWSDISLSDIESSTSGSDSSLSDGLPVHLANIADELTQKKKMFKKKKKKSLQTRKQRNEQYQKKNLMQKLKLTEDTSEKAGFASTLQKQPTFFKNSENSSFLPMKNENPRLNETNLNRRDKDTPLDPSMATLILPKNKGRMQNKKPGFTVSCSPKRTINSSQEPAPGMKPNWPRSRYPATKRGCAAMAAYPSLHIYTYP.

Residues 396-666 (YPYTYTDLQC…HVCDTLLDFC (271 aa)) form the Peptidase M14 domain. Residues H462, E465, and H558 each coordinate Zn(2+). E630 serves as the catalytic Proton donor/acceptor. Over residues 746–758 (FKKKKKKSLQTRK) the composition is skewed to basic residues. Disordered stretches follow at residues 746–770 (FKKK…KNLM) and 796–879 (FKNS…PRSR). The segment covering 853–866 (VSCSPKRTINSSQE) has biased composition (polar residues).

It belongs to the peptidase M14 family. Interacts with RARRES1, KIF11 AND MAPRE1. Zn(2+) is required as a cofactor.

The protein resides in the cytoplasm. It is found in the cytosol. Its subcellular location is the cytoskeleton. It localises to the microtubule organizing center. The protein localises to the centrosome. The protein resides in the centriole. It is found in the cilium basal body. The catalysed reaction is (L-glutamyl)(n+1)-gamma-L-glutamyl-L-glutamyl-[protein] + H2O = (L-glutamyl)(n)-gamma-L-glutamyl-L-glutamyl-[protein] + L-glutamate. Inhibited by RARRES1. Metallocarboxypeptidase that mediates deglutamylation of tubulin and non-tubulin target proteins. Catalyzes the removal of polyglutamate side chains present on the gamma-carboxyl group of glutamate residues within the C-terminal tail of tubulin protein. Specifically cleaves tubulin long-side-chains, while it is not able to remove the branching point glutamate. Also catalyzes the removal of polyglutamate residues from the carboxy-terminus of non-tubulin proteins such as MYLK. The sequence is that of Cytosolic carboxypeptidase 2 from Homo sapiens (Human).